Reading from the N-terminus, the 560-residue chain is Oxygen-dependent choline dehydrogenase (560 aa).

Residue 8–37 (DYIIIGAGSAGNVLATRLTEDADVSVLLLE) coordinates FAD. Catalysis depends on H475, which acts as the Proton acceptor.

This sequence belongs to the GMC oxidoreductase family. FAD serves as cofactor.

The enzyme catalyses choline + A = betaine aldehyde + AH2. It catalyses the reaction betaine aldehyde + NAD(+) + H2O = glycine betaine + NADH + 2 H(+). It functions in the pathway amine and polyamine biosynthesis; betaine biosynthesis via choline pathway; betaine aldehyde from choline (cytochrome c reductase route): step 1/1. Involved in the biosynthesis of the osmoprotectant glycine betaine. Catalyzes the oxidation of choline to betaine aldehyde and betaine aldehyde to glycine betaine at the same rate. This Stenotrophomonas maltophilia (strain K279a) protein is Oxygen-dependent choline dehydrogenase.